Consider the following 154-residue polypeptide: Acidic phospholipase A2 1 (154 aa).

The N-terminal stretch at 1-19 (MHPAHLLVLLGVCVSLLGA) is a signal peptide. Positions 20–27 (ARIPPLPL) are excised as a propeptide. 7 disulfides stabilise this stretch: C38–C104, C54–C153, C56–C72, C71–C132, C78–C125, C88–C118, and C111–C123. Positions 55, 57, and 59 each coordinate Ca(2+). The active site involves H75. Position 76 (D76) interacts with Ca(2+). Residue D126 is part of the active site.

The protein belongs to the phospholipase A2 family. Group I subfamily. D49 sub-subfamily. As to quaternary structure, monomer. Ca(2+) serves as cofactor. In terms of tissue distribution, expressed by the venom gland.

The protein resides in the secreted. The catalysed reaction is a 1,2-diacyl-sn-glycero-3-phosphocholine + H2O = a 1-acyl-sn-glycero-3-phosphocholine + a fatty acid + H(+). Functionally, snake venom phospholipase A2 (PLA2) that shows moderate enzymatic activity and exhibits procoagulant activity. PLA2 catalyzes the calcium-dependent hydrolysis of the 2-acyl groups in 3-sn-phosphoglycerides. This Pseudonaja textilis (Eastern brown snake) protein is Acidic phospholipase A2 1.